Here is a 150-residue protein sequence, read N- to C-terminus: Avidin-related protein 1 (150 aa).

The first 24 residues, 1-24 (MVHATSPLLLLLLLSLALVAPGLS), serve as a signal peptide directing secretion. The 122-residue stretch at 26–147 (RKCSLTGKWD…GNNDFTRQRT (122 aa)) folds into the Avidin-like domain. Cys28 and Cys105 form a disulfide bridge. Residues Asn36 and Ser40 each contribute to the biotin site. Asn54 carries N-linked (GlcNAc...) asparagine glycosylation. Biotin contacts are provided by Tyr57, Thr59, and Asp63. 2 N-linked (GlcNAc...) asparagine glycosylation sites follow: Asn67 and Asn93. Biotin contacts are provided by Ser95, Ser99, and Asn140.

Belongs to the avidin/streptavidin family. In terms of assembly, homotetramer. Post-translationally, glycosylated.

The protein localises to the secreted. In terms of biological role, forms a strong non-covalent specific complex with biotin. The polypeptide is Avidin-related protein 1 (AVR1) (Gallus gallus (Chicken)).